The sequence spans 350 residues: Thioredoxin-like fold domain-containing protein MRL7L, chloroplastic (350 aa).

A chloroplast-targeting transit peptide spans M1 to A48. 2 disordered regions span residues K78–P107 and N182–K201. 2 stretches are compositionally biased toward acidic residues: residues D82–K93 and E186–E200.

The protein localises to the plastid. The protein resides in the chloroplast stroma. It localises to the nucleus. Plays an essential role in early steps of chloroplast development. Involved in the regulation of plastid gene expression. Required for the proper function of the plastid transcriptional machinery and protein accumulation in thylakoid membranes. May function as molecular chaperone to ensure proper organization of the nucleoids in chloroplasts. Is a necessary component of phytochrome signaling for photosynthesis-associated plastid-encoded genes (PhAPGs) activation. Mediates the degradation of two repressors of chloroplast biogenesis, PIF1 and PIF3 in nucleus. Promotes the assembly of the plastid-encoded RNA polymerase (PEP) complex for PhAPG transcription in plastids. This Arabidopsis thaliana (Mouse-ear cress) protein is Thioredoxin-like fold domain-containing protein MRL7L, chloroplastic.